Consider the following 1622-residue polypeptide: WD repeat-containing protein 97 (1622 aa).

WD repeat units follow at residues serine 187 to valine 233, leucine 290 to phenylalanine 329, glycine 331 to glutamate 370, glutamate 552 to glutamine 592, glutamate 594 to leucine 633, and aspartate 687 to leucine 726. Disordered stretches follow at residues glycine 1090–glutamate 1112 and leucine 1453–aspartate 1472. Residues glycine 1094 to alanine 1118 adopt a coiled-coil conformation. Positions glutamate 1096 to glutamate 1112 are enriched in acidic residues.

This Homo sapiens (Human) protein is WD repeat-containing protein 97.